The following is a 612-amino-acid chain: Sorting nexin MVP1 (612 aa).

The tract at residues 35–68 (SSAPSPAGSVTPARATASASEGRNIAANGNKEEG) is disordered. The PX domain occupies 226–334 (WKDQERIVVT…NIFLTSSSFE (109 aa)). A 1,2-diacyl-sn-glycero-3-phospho-(1D-myo-inositol-3-phosphate)-binding residues include Arg-263, Ser-265, Lys-289, and Arg-301.

It belongs to the sorting nexin family.

Its subcellular location is the cytoplasm. It localises to the membrane. Functionally, required for vacuolar protein sorting. The polypeptide is Sorting nexin MVP1 (MVP1) (Cryptococcus neoformans var. neoformans serotype D (strain B-3501A) (Filobasidiella neoformans)).